The following is a 698-amino-acid chain: Methionine--tRNA ligase (698 aa).

Positions 21–31 match the 'HIGH' region motif; it reads PYANGPLHFGH. Zn(2+)-binding residues include Cys-153, Cys-156, Cys-166, and Cys-169. Residues 341 to 345 carry the 'KMSKS' region motif; the sequence is QFSKS. Lys-344 is a binding site for ATP. The 100-residue stretch at 599 to 698 folds into the tRNA-binding domain; sequence DFRKLDLRVG…EDVAPGSLVS (100 aa).

Belongs to the class-I aminoacyl-tRNA synthetase family. MetG type 1 subfamily. In terms of assembly, homodimer. It depends on Zn(2+) as a cofactor.

The protein resides in the cytoplasm. It carries out the reaction tRNA(Met) + L-methionine + ATP = L-methionyl-tRNA(Met) + AMP + diphosphate. In terms of biological role, is required not only for elongation of protein synthesis but also for the initiation of all mRNA translation through initiator tRNA(fMet) aminoacylation. The polypeptide is Methionine--tRNA ligase (Protochlamydia amoebophila (strain UWE25)).